The sequence spans 167 residues: MNFLDESFWLTISFVIFVYLIYRPAKKAILNALDTKISEIQEKVLKAKKLKEDAALLFEQTKLQIQKLETLRSQMIEESDKATKQIIQDKTKEMEEFLERKKADAIQLIQNQKSTASKDLQDEFCDEVITLVSKYFRSAKLSEKSIAKNLMDKSDFVHNDSKATYLH.

Residues 7–25 form a helical membrane-spanning segment; the sequence is SFWLTISFVIFVYLIYRPA.

This sequence belongs to the ATPase B chain family. As to quaternary structure, F-type ATPases have 2 components, F(1) - the catalytic core - and F(0) - the membrane proton channel. F(1) has five subunits: alpha(3), beta(3), gamma(1), delta(1), epsilon(1). F(0) has three main subunits: a(1), b(2) and c(10-14). The alpha and beta chains form an alternating ring which encloses part of the gamma chain. F(1) is attached to F(0) by a central stalk formed by the gamma and epsilon chains, while a peripheral stalk is formed by the delta and b chains.

It localises to the cell inner membrane. Its function is as follows. F(1)F(0) ATP synthase produces ATP from ADP in the presence of a proton or sodium gradient. F-type ATPases consist of two structural domains, F(1) containing the extramembraneous catalytic core and F(0) containing the membrane proton channel, linked together by a central stalk and a peripheral stalk. During catalysis, ATP synthesis in the catalytic domain of F(1) is coupled via a rotary mechanism of the central stalk subunits to proton translocation. Functionally, component of the F(0) channel, it forms part of the peripheral stalk, linking F(1) to F(0). This is ATP synthase subunit b from Rickettsia prowazekii (strain Madrid E).